The chain runs to 318 residues: Inactive dihydropteroate synthase 2 (318 aa).

Positions 1–25 (MRSTPPASAGRSTPPALAGHSTPPA) are disordered. A Pterin-binding domain is found at 42 to 299 (ALIMAIVNRT…EVAATRRVLE (258 aa)).

The protein belongs to the DHPS family. Homodimer.

In terms of biological role, has very low affinity for the DHPS substrate 6-hydroxymethyl-7,8-dihydropterin-pyrophosphate, but can bind the inhibitor dapsone. Seems to lack dihydropteroate synthase activity, and does probably not function in folate metabolism. The sequence is that of Inactive dihydropteroate synthase 2 (folP2) from Mycobacterium bovis (strain ATCC BAA-935 / AF2122/97).